The sequence spans 783 residues: Endonuclease MutS2 (783 aa).

Position 337-344 (Gly337–Thr344) interacts with ATP. Positions Leu708 to Lys783 constitute a Smr domain.

This sequence belongs to the DNA mismatch repair MutS family. MutS2 subfamily. Homodimer. Binds to stalled ribosomes, contacting rRNA.

Endonuclease that is involved in the suppression of homologous recombination and thus may have a key role in the control of bacterial genetic diversity. In terms of biological role, acts as a ribosome collision sensor, splitting the ribosome into its 2 subunits. Detects stalled/collided 70S ribosomes which it binds and splits by an ATP-hydrolysis driven conformational change. Acts upstream of the ribosome quality control system (RQC), a ribosome-associated complex that mediates the extraction of incompletely synthesized nascent chains from stalled ribosomes and their subsequent degradation. Probably generates substrates for RQC. The sequence is that of Endonuclease MutS2 from Staphylococcus haemolyticus (strain JCSC1435).